The chain runs to 162 residues: Putative auxin-responsive protein IAA28 (162 aa).

Residues 23–118 (SRFVKVFMHG…TVKRIYIVPA (96 aa)) form the PB1 domain. The tract at residues 122-141 (NESEYQEEEEDNAAAAATAD) is disordered.

This sequence belongs to the Aux/IAA family. In terms of assembly, homodimers and heterodimers.

The protein resides in the nucleus. Aux/IAA proteins are short-lived transcriptional factors that function as repressors of early auxin response genes at low auxin concentrations. In Oryza sativa subsp. japonica (Rice), this protein is Putative auxin-responsive protein IAA28 (IAA28).